The chain runs to 482 residues: MKFIIKLFPEITIKSQSVRLRFIKILTGNIRNVLKHYDETLAVVRHWDNIEVRAKDENQRLAIRDALTRIPGIHHILEVEDVPFTDMHDIFEKALVQYRDQLEGKTFCVRVKRRGKHDFSSIDVERYVGGGLNQHIESARVKLTNPEVTVHLEVEDDRLLLIKGRYEGIGGFPIGTQEDVLSLISGGFDSGVSSYMLMRRGCRVHYCFFNLGGAAHEIGVRQVAHYLWNRFGSSHRVRFVAINFEPVVGEILEKIDDGQMGVILKRMMVRAASKVAERYGVQALVTGEALGQVSSQTLTNLRLIDNVSDTLILRPLISYDKEHIINLARQIGTEDFARTMPEYCGVISKSPTVKAVKSKIEAEEEKFDFSILDKVVEEANNVDIREIAQQTEQEVVEVETVNGFGPNDVILDIRSIDEQEDKPLKVEGIDVVSLPFYKLSTKFGDLDQSKTWLLWCERGVMSRLQALYLREQGFNNVKVYRP.

One can recognise a THUMP domain in the interval 61 to 165 (LAIRDALTRI…DDRLLLIKGR (105 aa)). ATP is bound by residues 183–184 (LI), lysine 265, glycine 287, and glutamine 296. A disulfide bond links cysteine 344 and cysteine 456. Residues 404–482 (FGPNDVILDI…GFNNVKVYRP (79 aa)) enclose the Rhodanese domain. Cysteine 456 acts as the Cysteine persulfide intermediate in catalysis.

This sequence belongs to the ThiI family.

The protein localises to the cytoplasm. It catalyses the reaction [ThiI sulfur-carrier protein]-S-sulfanyl-L-cysteine + a uridine in tRNA + 2 reduced [2Fe-2S]-[ferredoxin] + ATP + H(+) = [ThiI sulfur-carrier protein]-L-cysteine + a 4-thiouridine in tRNA + 2 oxidized [2Fe-2S]-[ferredoxin] + AMP + diphosphate. The enzyme catalyses [ThiS sulfur-carrier protein]-C-terminal Gly-Gly-AMP + S-sulfanyl-L-cysteinyl-[cysteine desulfurase] + AH2 = [ThiS sulfur-carrier protein]-C-terminal-Gly-aminoethanethioate + L-cysteinyl-[cysteine desulfurase] + A + AMP + 2 H(+). It participates in cofactor biosynthesis; thiamine diphosphate biosynthesis. Catalyzes the ATP-dependent transfer of a sulfur to tRNA to produce 4-thiouridine in position 8 of tRNAs, which functions as a near-UV photosensor. Also catalyzes the transfer of sulfur to the sulfur carrier protein ThiS, forming ThiS-thiocarboxylate. This is a step in the synthesis of thiazole, in the thiamine biosynthesis pathway. The sulfur is donated as persulfide by IscS. The polypeptide is tRNA sulfurtransferase (Escherichia coli O45:K1 (strain S88 / ExPEC)).